The primary structure comprises 199 residues: Recombination protein RecR (199 aa).

The segment at cysteine 60–cysteine 75 adopts a C4-type zinc-finger fold. The 96-residue stretch at serine 83 to proline 178 folds into the Toprim domain.

It belongs to the RecR family.

Functionally, may play a role in DNA repair. It seems to be involved in an RecBC-independent recombinational process of DNA repair. It may act with RecF and RecO. The protein is Recombination protein RecR of Paracidovorax citrulli (strain AAC00-1) (Acidovorax citrulli).